Consider the following 281-residue polypeptide: Lectin (281 aa).

Positions 1 to 26 (MATYKLCSVLALSLTLFLLILNKVNS) are cleaved as a signal peptide. Residues asparagine 43 and asparagine 139 are each glycosylated (N-linked (GlcNAc...) asparagine). Positions 269–281 (AVIPTSNHNTFAI) are excised as a propeptide.

This sequence belongs to the leguminous lectin family. Homodimer. Post-translationally, a minor C-terminal proteolytic processing site is observed at position 268.

Galactose and N-acetyllactosamine specific lectin. Binds to the H-2 blood type determinant fucosyl-N-acetyllactosamine. The polypeptide is Lectin (Erythrina corallodendron (Coral tree)).